The sequence spans 83 residues: Subtilisin-chymotrypsin inhibitor CI-1A (83 aa).

Residues 1–24 (MSSMEGSVLKYPEPTEGSIGASSA) are disordered.

This sequence belongs to the protease inhibitor I13 (potato type I serine protease inhibitor) family.

Functionally, inhibits both subtilisin and chymotrypsin. The protein is Subtilisin-chymotrypsin inhibitor CI-1A of Hordeum vulgare (Barley).